The following is a 103-amino-acid chain: UPF0122 protein FN1394 (103 aa).

It belongs to the UPF0122 family.

Functionally, might take part in the signal recognition particle (SRP) pathway. This is inferred from the conservation of its genetic proximity to ftsY/ffh. May be a regulatory protein. This is UPF0122 protein FN1394 from Fusobacterium nucleatum subsp. nucleatum (strain ATCC 25586 / DSM 15643 / BCRC 10681 / CIP 101130 / JCM 8532 / KCTC 2640 / LMG 13131 / VPI 4355).